We begin with the raw amino-acid sequence, 300 residues long: Protein ARMCX6 (300 aa).

Over 1-6 the chain is Mitochondrial intermembrane; it reads MGRARE. Mitochondrion outer membrane (MOM)-targeting sequence regions lie at residues 1 to 6 and 26 to 36; these read MGRARE and KLTIGRDDSEK. The helical; Signal-anchor transmembrane segment at 7–27 threads the bilayer; the sequence is VGWMAAGLMIGAGACYCVYKL. Over 28-300 the chain is Cytoplasmic; sequence TIGRDDSEKL…REILLETPAP (273 aa). Disordered regions lie at residues 35–54 and 69–99; these read EKLEEEGEEEWDDDQELDEE and WTEDGDWTEPGAPGGTEDRPSGGGKANRAHP.

The protein belongs to the eutherian X-chromosome-specific Armcx family.

It localises to the mitochondrion. It is found in the mitochondrion outer membrane. Its function is as follows. May regulate the dynamics and distribution of mitochondria in neural cells. The protein is Protein ARMCX6 (ARMCX6) of Homo sapiens (Human).